The following is a 254-amino-acid chain: 3-dehydroquinate dehydratase (254 aa).

3-dehydroquinate is bound by residues 47 to 49 (EFR) and R83. Residue H144 is the Proton donor/acceptor of the active site. Residue K171 is the Schiff-base intermediate with substrate of the active site. Positions 213, 232, and 236 each coordinate 3-dehydroquinate.

It belongs to the type-I 3-dehydroquinase family. In terms of assembly, homodimer.

The catalysed reaction is 3-dehydroquinate = 3-dehydroshikimate + H2O. Its pathway is metabolic intermediate biosynthesis; chorismate biosynthesis; chorismate from D-erythrose 4-phosphate and phosphoenolpyruvate: step 3/7. Functionally, involved in the third step of the chorismate pathway, which leads to the biosynthesis of aromatic amino acids. Catalyzes the cis-dehydration of 3-dehydroquinate (DHQ) and introduces the first double bond of the aromatic ring to yield 3-dehydroshikimate. In Neisseria meningitidis serogroup A / serotype 4A (strain DSM 15465 / Z2491), this protein is 3-dehydroquinate dehydratase.